We begin with the raw amino-acid sequence, 225 residues long: Ribonuclease T (225 aa).

The tract at residues 1 to 21 is disordered; that stretch reads MSEDHFDDEHEGHGGGGGSRH. Residues 33–207 enclose the Exonuclease domain; the sequence is VVVDVETGGF…YDTEKTAELF (175 aa). Mg(2+) contacts are provided by Asp-36, Glu-38, His-194, and Asp-199. The Proton donor/acceptor role is filled by His-194.

It belongs to the RNase T family. As to quaternary structure, homodimer. Mg(2+) is required as a cofactor.

Its function is as follows. Trims short 3' overhangs of a variety of RNA species, leaving a one or two nucleotide 3' overhang. Responsible for the end-turnover of tRNA: specifically removes the terminal AMP residue from uncharged tRNA (tRNA-C-C-A). Also appears to be involved in tRNA biosynthesis. The sequence is that of Ribonuclease T from Pseudomonas savastanoi pv. phaseolicola (strain 1448A / Race 6) (Pseudomonas syringae pv. phaseolicola (strain 1448A / Race 6)).